The chain runs to 243 residues: Terpene cyclase dpasB (243 aa).

7 helical membrane passes run Val16 to Ile36, Met50 to Pro70, Ile79 to Ala99, Leu112 to Glu132, Ala141 to Cys161, Leu172 to Leu189, and Ile207 to Val227.

The protein belongs to the paxB family.

Its subcellular location is the membrane. It functions in the pathway secondary metabolite biosynthesis; terpenoid biosynthesis. Its function is as follows. Terpene cyclase; part of the gene cluster that mediates the biosynthesis of the diterpenoid pyrones subglutinols A and B. The first step of the pathway is the synthesis of the alpha-pyrone moiety by the polyketide synthase dpasA via condensation of one acetyl-CoA starter unit with 3 malonyl-CoA units and 2 methylations. The alpha-pyrone is then combined with geranylgeranyl pyrophosphate (GGPP) formed by the GGPP synthase dpasD through the action of the prenyltransferase dpasC to yield a linear alpha-pyrone diterpenoid. Subsequent steps in the diterpenoid pyrone biosynthetic pathway involve the decalin core formation, which is initiated by the epoxidation of the C10-C11 olefin by the FAD-dependent oxidoreductase dpasE, and is followed by a cyclization cascade catalyzed by the terpene cyclase dpasB. The FAD-linked oxidoreductase dpasF is then involved in tetrahydrofuran (THF) ring formation at the C5 unit to complete the formation of subglutinols A and B. DpasF possesses also an additional catalytic ability of multi-step oxidations to generate a new DDP analog with an enone system at the C5 named FDDP A. This Apiospora sacchari (Arthrinium sacchari) protein is Terpene cyclase dpasB.